Consider the following 273-residue polypeptide: Ethanolamine ammonia-lyase small subunit (273 aa).

Adenosylcob(III)alamin contacts are provided by V164, E185, and C214.

The protein belongs to the EutC family. As to quaternary structure, the basic unit is a heterodimer which dimerizes to form tetramers. The heterotetramers trimerize; 6 large subunits form a core ring with 6 small subunits projecting outwards. The cofactor is adenosylcob(III)alamin.

The protein resides in the bacterial microcompartment. The catalysed reaction is ethanolamine = acetaldehyde + NH4(+). It functions in the pathway amine and polyamine degradation; ethanolamine degradation. Catalyzes the deamination of various vicinal amino-alcohols to oxo compounds. Allows this organism to utilize ethanolamine as the sole source of nitrogen and carbon in the presence of external vitamin B12. In Pseudomonas aeruginosa (strain LESB58), this protein is Ethanolamine ammonia-lyase small subunit.